The sequence spans 85 residues: Beta-mammal/insect toxin Lqhb1 (85 aa).

A signal peptide spans 1–19; it reads MKIIIFLIVSSLMLIGVKT. The 63-residue stretch at 20-82 folds into the LCN-type CS-alpha/beta domain; sequence DNGYLLNKAT…LWAYATNKCN (63 aa). Cystine bridges form between cysteine 31–cysteine 81, cysteine 35–cysteine 56, cysteine 42–cysteine 63, and cysteine 46–cysteine 65.

It belongs to the long (4 C-C) scorpion toxin superfamily. Sodium channel inhibitor family. Expressed by the venom gland.

The protein localises to the secreted. Its function is as follows. Beta toxins bind voltage-independently at site-4 of sodium channels (Nav) and shift the voltage of activation toward more negative potentials thereby affecting sodium channel activation and promoting spontaneous and repetitive firing. Competes, with apparent high affinity, with anti-insect and anti-mammalian beta-toxins for binding to cockroach and rat brain synaptosomes, respectively. Also competes with an anti-mammalian alpha-toxin on binding to rat brain sodium channels. Has a weak effect on cardiac sodium channels and a marked effect on rat brain and skeletal muscle sodium channels. This Leiurus hebraeus (Hebrew deathstalker scorpion) protein is Beta-mammal/insect toxin Lqhb1.